A 477-amino-acid polypeptide reads, in one-letter code: Aspartyl/glutamyl-tRNA(Asn/Gln) amidotransferase subunit B (477 aa).

The protein belongs to the GatB/GatE family. GatB subfamily. In terms of assembly, heterotrimer of A, B and C subunits.

The enzyme catalyses L-glutamyl-tRNA(Gln) + L-glutamine + ATP + H2O = L-glutaminyl-tRNA(Gln) + L-glutamate + ADP + phosphate + H(+). It catalyses the reaction L-aspartyl-tRNA(Asn) + L-glutamine + ATP + H2O = L-asparaginyl-tRNA(Asn) + L-glutamate + ADP + phosphate + 2 H(+). Its function is as follows. Allows the formation of correctly charged Asn-tRNA(Asn) or Gln-tRNA(Gln) through the transamidation of misacylated Asp-tRNA(Asn) or Glu-tRNA(Gln) in organisms which lack either or both of asparaginyl-tRNA or glutaminyl-tRNA synthetases. The reaction takes place in the presence of glutamine and ATP through an activated phospho-Asp-tRNA(Asn) or phospho-Glu-tRNA(Gln). In Nitrosococcus oceani (strain ATCC 19707 / BCRC 17464 / JCM 30415 / NCIMB 11848 / C-107), this protein is Aspartyl/glutamyl-tRNA(Asn/Gln) amidotransferase subunit B.